A 322-amino-acid polypeptide reads, in one-letter code: 6-deoxy-6-sulfo-D-fructose transketolase subunit SqwH (322 aa).

Belongs to the transketolase family. In terms of assembly, forms a complex with SqwG. It depends on thiamine diphosphate as a cofactor.

The enzyme catalyses 6-deoxy-6-sulfo-D-fructose + D-glyceraldehyde 3-phosphate = 4-deoxy-4-sulfo-D-erythrose + D-xylulose 5-phosphate. The catalysed reaction is 4-deoxy-4-sulfo-D-erythrulose + D-glyceraldehyde 3-phosphate = sulfoacetaldehyde + D-xylulose 5-phosphate. Part of the sulfo-TK pathway, a D-sulfoquinovose degradation pathway that produces 2-hydroxyethane-1-sulfonate (isethionate). Catalyzes two steps of the pathway: the formation of 4-deoxy-4-sulfoerythrose (SE) and xylulose 5-phosphate from 6-deoxy-6-sulfo-D-fructose (SF) and glyceraldehyde 3-phosphate, and the formation of sulfoacetaldehyde (SA) and xylulose 5-phosphate from 4-deoxy-4-sulfo-D-erythrulose (SEu) and glyceraldehyde 3-phosphate. The polypeptide is 6-deoxy-6-sulfo-D-fructose transketolase subunit SqwH (Clostridium sp. (strain MSTE9)).